An 85-amino-acid polypeptide reads, in one-letter code: Phycobilisome 9.7 kDa linker polypeptide, phycocyanin-associated, rod (85 aa).

Residues 16 to 74 (NRVFVYEVEGLRQNEQTDNNRYQIRNSSTIEIQVPYSRMNEEDRRITRLGGRIVNIRPA) form the CpcD-like domain.

The protein belongs to the phycobilisome linker protein family.

The protein resides in the cellular thylakoid membrane. Functionally, rod linker protein, associated with phycocyanin. Linker polypeptides determine the state of aggregation and the location of the disk-shaped phycobiliprotein units within the phycobilisome and modulate their spectroscopic properties in order to mediate a directed and optimal energy transfer. This is Phycobilisome 9.7 kDa linker polypeptide, phycocyanin-associated, rod (cpcD2) from Microchaete diplosiphon (Fremyella diplosiphon).